The chain runs to 382 residues: Probable cytosolic iron-sulfur protein assembly protein 1 (382 aa).

7 WD repeats span residues 9 to 48 (AHHD…KFPR), 55 to 107 (THTR…DNDE), 138 to 178 (GHEH…EEFE), 185 to 224 (EHQQ…DDWG), 231 to 278 (GHQG…SETN), 303 to 342 (AHTY…WEIE), and 349 to 382 (HGVH…NVWE).

It belongs to the WD repeat CIA1 family. Interacts with NAR1.

The protein localises to the cytoplasm. Its subcellular location is the nucleus. Its function is as follows. Essential component of the cytosolic iron-sulfur (Fe/S) protein assembly machinery. Required for the maturation of extramitochondrial Fe/S proteins. In Meyerozyma guilliermondii (strain ATCC 6260 / CBS 566 / DSM 6381 / JCM 1539 / NBRC 10279 / NRRL Y-324) (Yeast), this protein is Probable cytosolic iron-sulfur protein assembly protein 1.